We begin with the raw amino-acid sequence, 351 residues long: tRNA (guanine(10)-N2)-dimethyltransferase (351 aa).

Positions 57–165 constitute a THUMP domain; that stretch reads EGHRIIFRYN…ENTFFISNVL (109 aa).

This sequence belongs to the methyltransferase superfamily. Trm-G10 family. As to quaternary structure, monomer.

The protein localises to the cytoplasm. The enzyme catalyses guanosine(10) in tRNA + 2 S-adenosyl-L-methionine = N(2)-dimethylguanosine(10) in tRNA + 2 S-adenosyl-L-homocysteine + 2 H(+). In terms of biological role, catalyzes the adenosylmethionine-dependent methylation of the exocyclic amino group (N(2)) of guanosine at position 10 of various tRNAs. Acts via a two-step process that leads to the formation of either N(2)-monomethyl (m(2)G) or N(2)-dimethylguanosine (m(2)(2)G). The chain is tRNA (guanine(10)-N2)-dimethyltransferase (trmG10) from Methanocaldococcus jannaschii (strain ATCC 43067 / DSM 2661 / JAL-1 / JCM 10045 / NBRC 100440) (Methanococcus jannaschii).